The sequence spans 653 residues: tRNA 5-methylaminomethyl-2-thiouridine biosynthesis bifunctional protein MnmC (653 aa).

Positions 1 to 233 (MKTAPITPGR…KRDITVARFT (233 aa)) are tRNA (mnm(5)s(2)U34)-methyltransferase. Residues 258-653 (IGAGLAGCAA…YALPRWRSDS (396 aa)) form an FAD-dependent cmnm(5)s(2)U34 oxidoreductase region.

This sequence in the N-terminal section; belongs to the methyltransferase superfamily. tRNA (mnm(5)s(2)U34)-methyltransferase family. In the C-terminal section; belongs to the DAO family. The cofactor is FAD.

Its subcellular location is the cytoplasm. The enzyme catalyses 5-aminomethyl-2-thiouridine(34) in tRNA + S-adenosyl-L-methionine = 5-methylaminomethyl-2-thiouridine(34) in tRNA + S-adenosyl-L-homocysteine + H(+). Its function is as follows. Catalyzes the last two steps in the biosynthesis of 5-methylaminomethyl-2-thiouridine (mnm(5)s(2)U) at the wobble position (U34) in tRNA. Catalyzes the FAD-dependent demodification of cmnm(5)s(2)U34 to nm(5)s(2)U34, followed by the transfer of a methyl group from S-adenosyl-L-methionine to nm(5)s(2)U34, to form mnm(5)s(2)U34. This is tRNA 5-methylaminomethyl-2-thiouridine biosynthesis bifunctional protein MnmC from Methylibium petroleiphilum (strain ATCC BAA-1232 / LMG 22953 / PM1).